A 233-amino-acid chain; its full sequence is Large ribosomal subunit protein uL1 (233 aa).

The protein belongs to the universal ribosomal protein uL1 family. As to quaternary structure, part of the 50S ribosomal subunit.

In terms of biological role, binds directly to 23S rRNA. The L1 stalk is quite mobile in the ribosome, and is involved in E site tRNA release. Its function is as follows. Protein L1 is also a translational repressor protein, it controls the translation of the L11 operon by binding to its mRNA. This Campylobacter curvus (strain 525.92) protein is Large ribosomal subunit protein uL1.